The following is a 619-amino-acid chain: MPHYRSRTSTHGRNMAGARALWRATGMKDGDFGKPIIAVVNSFTQFVPGHVHLRDLGALVASEIEAAGGVAKEFNTIAVDDGIAMGHGGMLYSLPSRELIADSVEYMVNAHCADAMVCISNCDKITPGMLMAAMRLNIPVVFVSGGPMEAGKITSPVDGKVIAKLDLVDAMIKAADPNVSDAEAEEVERSACPTCGSCSGMFTANSMNCLTEAIGLALPGNGTIVATHAWRKGLFEQAGRLVVELCRRYYEQDDASVLPRSIATKSAFENAMTLDVAMGGSTNTVLHLLAAAQEAGVDFTMSDIDRISRRVPCLCKAAPATDKYHIEDVHRAGGILGILGELGRADLLDLSCGNVHSGTLGEAINQWDINGGAGEAAQKFFRAAPGGIPTTVAFSQDATFLTLDMDRQTGCIRDKAHAYSQDGGLAVLYGNLAEKGCIVKTAGVDESQWVFTGRARVFESQEDAVEGILGDRVQAGDVVIIRYEGPKGGPGMQEMLYPTSYLKSKGLGKTCALFTDGRFSGGSSGLVIGHASPEAAEGGTIGLVEEGDTIEIDIPNRRIHLAVGDTVLAERRAAMQARGEQAWQPVDRERVVSQALRAYAALATSADRGAVRDLSQLKR.

Aspartate 81 is a binding site for Mg(2+). Cysteine 122 is a [2Fe-2S] cluster binding site. Aspartate 123 and lysine 124 together coordinate Mg(2+). N6-carboxylysine is present on lysine 124. Cysteine 198 is a [2Fe-2S] cluster binding site. A Mg(2+)-binding site is contributed by glutamate 494. Residue serine 520 is the Proton acceptor of the active site.

Belongs to the IlvD/Edd family. Homodimer. The cofactor is [2Fe-2S] cluster. Requires Mg(2+) as cofactor.

The enzyme catalyses (2R)-2,3-dihydroxy-3-methylbutanoate = 3-methyl-2-oxobutanoate + H2O. The catalysed reaction is (2R,3R)-2,3-dihydroxy-3-methylpentanoate = (S)-3-methyl-2-oxopentanoate + H2O. Its pathway is amino-acid biosynthesis; L-isoleucine biosynthesis; L-isoleucine from 2-oxobutanoate: step 3/4. The protein operates within amino-acid biosynthesis; L-valine biosynthesis; L-valine from pyruvate: step 3/4. Functions in the biosynthesis of branched-chain amino acids. Catalyzes the dehydration of (2R,3R)-2,3-dihydroxy-3-methylpentanoate (2,3-dihydroxy-3-methylvalerate) into 2-oxo-3-methylpentanoate (2-oxo-3-methylvalerate) and of (2R)-2,3-dihydroxy-3-methylbutanoate (2,3-dihydroxyisovalerate) into 2-oxo-3-methylbutanoate (2-oxoisovalerate), the penultimate precursor to L-isoleucine and L-valine, respectively. In Bordetella bronchiseptica (strain ATCC BAA-588 / NCTC 13252 / RB50) (Alcaligenes bronchisepticus), this protein is Dihydroxy-acid dehydratase 1.